A 995-amino-acid chain; its full sequence is Aconitate hydratase 2, mitochondrial (995 aa).

The N-terminal 83 residues, 1 to 83 (MYRRATSGVR…PASLRAQARN (83 aa)), are a transit peptide targeting the mitochondrion. Substrate-binding positions include Gln187 and 306–308 (DSH). Cys538, Cys604, and Cys607 together coordinate [4Fe-4S] cluster. Substrate contacts are provided by residues Arg637, Arg642, Arg800, and 881–882 (SR).

The protein belongs to the aconitase/IPM isomerase family. Monomer. The cofactor is [4Fe-4S] cluster. Mostly expressed in roots, leaves and flowers, also present in stems, and, at low levels, in seeds.

It localises to the mitochondrion. The catalysed reaction is citrate = D-threo-isocitrate. The protein operates within carbohydrate metabolism; tricarboxylic acid cycle; isocitrate from oxaloacetate: step 2/2. Catalyzes the isomerization of citrate to isocitrate via cis-aconitate. Contributes to oxidative stress tolerance. Involved in acetate assimilation. In Arabidopsis thaliana (Mouse-ear cress), this protein is Aconitate hydratase 2, mitochondrial.